Here is a 574-residue protein sequence, read N- to C-terminus: Isocitrate dehydrogenase kinase/phosphatase (574 aa).

ATP-binding positions include 315 to 321 (APGIRGM) and Lys336. The active site involves Asp371.

Belongs to the AceK family.

The protein localises to the cytoplasm. It carries out the reaction L-seryl-[isocitrate dehydrogenase] + ATP = O-phospho-L-seryl-[isocitrate dehydrogenase] + ADP + H(+). Functionally, bifunctional enzyme which can phosphorylate or dephosphorylate isocitrate dehydrogenase (IDH) on a specific serine residue. This is a regulatory mechanism which enables bacteria to bypass the Krebs cycle via the glyoxylate shunt in response to the source of carbon. When bacteria are grown on glucose, IDH is fully active and unphosphorylated, but when grown on acetate or ethanol, the activity of IDH declines drastically concomitant with its phosphorylation. The protein is Isocitrate dehydrogenase kinase/phosphatase of Escherichia coli O127:H6 (strain E2348/69 / EPEC).